The chain runs to 55 residues: Large ribosomal subunit protein bL33 (55 aa).

The protein belongs to the bacterial ribosomal protein bL33 family.

This Methylobacterium sp. (strain 4-46) protein is Large ribosomal subunit protein bL33.